The primary structure comprises 133 residues: Nucleoid-associated protein Mb3743c (133 aa).

A disordered region spans residues 98–133; that stretch reads GAMRPPAPPAAPPGAPGMPGMPGMPGAPGAPPVPGI. Residues 102-113 are compositionally biased toward pro residues; sequence PPAPPAAPPGAP.

This sequence belongs to the YbaB/EbfC family. Homodimer.

It localises to the cytoplasm. The protein resides in the nucleoid. Its function is as follows. Binds to DNA and alters its conformation. May be involved in regulation of gene expression, nucleoid organization and DNA protection. This is Nucleoid-associated protein Mb3743c from Mycobacterium bovis (strain ATCC BAA-935 / AF2122/97).